Reading from the N-terminus, the 267-residue chain is Tryptophan synthase alpha chain (267 aa).

Residues glutamate 49 and aspartate 60 each act as proton acceptor in the active site.

This sequence belongs to the TrpA family. As to quaternary structure, tetramer of two alpha and two beta chains.

It catalyses the reaction (1S,2R)-1-C-(indol-3-yl)glycerol 3-phosphate + L-serine = D-glyceraldehyde 3-phosphate + L-tryptophan + H2O. It participates in amino-acid biosynthesis; L-tryptophan biosynthesis; L-tryptophan from chorismate: step 5/5. Functionally, the alpha subunit is responsible for the aldol cleavage of indoleglycerol phosphate to indole and glyceraldehyde 3-phosphate. In Rippkaea orientalis (strain PCC 8801 / RF-1) (Cyanothece sp. (strain PCC 8801)), this protein is Tryptophan synthase alpha chain.